Here is a 203-residue protein sequence, read N- to C-terminus: Potassium channel Cha6605_3372 (203 aa).

At 1-7 the chain is on the cytoplasmic side; the sequence is MVEAPEQ. The chain crosses the membrane as a helical span at residues 8–31; it reads SETGRIEAFSDGVFAIAITLLVLE. The RxxxFSD motif motif lies at 12 to 18; that stretch reads RIEAFSD. Over 32–52 the chain is Extracellular; sequence IKVPQHKIVETVGLVSSLLSL. The tract at residues 37–42 is short helix H1; sequence HKIVET. The segment at 44 to 50 is short helix H2; sequence GLVSSLL. Residues 53 to 78 traverse the membrane as a helical segment; it reads WPSYLAFLTSFASILVMWVNHHRIFS. The Cytoplasmic segment spans residues 79–84; sequence LVARTD. A helical membrane pass occupies residues 85 to 110; sequence HAFFYWNGLLLMLVTFVPFPTALLAE. Topologically, residues 111 to 117 are extracellular; that stretch reads YLIHPQA. Residues 118–142 form a helical membrane-spanning segment; that stretch reads RVAASVYAGIFLAIAIVFNRLWKHA. Over 143 to 154 the chain is Cytoplasmic; sequence ATADRLLAQKAD. Residues 155–181 form a helical membrane-spanning segment; the sequence is RHEVDAITKQYRFGPGLYLVAFALSFI. The Extracellular segment spans residues 182–183; sequence SV. A helical membrane pass occupies residues 184-199; it reads WLSVGVCFVLAIYFAL. The Cytoplasmic portion of the chain corresponds to 200–203; sequence RSNA.

Belongs to the TMEM175 family. In terms of assembly, homotetramer.

The protein resides in the membrane. It catalyses the reaction K(+)(in) = K(+)(out). Its function is as follows. Potassium channel. The channel is permeable for K(+), Rb(+) and Cs(+), while it is unable to conduct Na(+). The chain is Potassium channel Cha6605_3372 from Chamaesiphon minutus (strain ATCC 27169 / PCC 6605).